Reading from the N-terminus, the 472-residue chain is UDP-N-acetylmuramate--L-alanine ligase (472 aa).

122 to 128 (GSHGKTT) contributes to the ATP binding site.

It belongs to the MurCDEF family.

Its subcellular location is the cytoplasm. It catalyses the reaction UDP-N-acetyl-alpha-D-muramate + L-alanine + ATP = UDP-N-acetyl-alpha-D-muramoyl-L-alanine + ADP + phosphate + H(+). Its pathway is cell wall biogenesis; peptidoglycan biosynthesis. Functionally, cell wall formation. This is UDP-N-acetylmuramate--L-alanine ligase from Prochlorococcus marinus (strain SARG / CCMP1375 / SS120).